A 336-amino-acid chain; its full sequence is D-alanine--D-alanine ligase (336 aa).

Residues 124 to 330 (KMWFSALGIP…FTQYLSLVIN (207 aa)) form the ATP-grasp domain. 154–209 (ALEKWGSIFVKAASQGSSVGCYKVDEASKVLGVLKDAFGYAPYVIVEKTIKARELE) is a binding site for ATP. 3 residues coordinate Mg(2+): Asp-284, Glu-297, and Asn-299.

It belongs to the D-alanine--D-alanine ligase family. Mg(2+) serves as cofactor. It depends on Mn(2+) as a cofactor.

It is found in the cytoplasm. It carries out the reaction 2 D-alanine + ATP = D-alanyl-D-alanine + ADP + phosphate + H(+). It participates in cell wall biogenesis; peptidoglycan biosynthesis. In terms of biological role, cell wall formation. This chain is D-alanine--D-alanine ligase, found in Shewanella oneidensis (strain ATCC 700550 / JCM 31522 / CIP 106686 / LMG 19005 / NCIMB 14063 / MR-1).